A 595-amino-acid polypeptide reads, in one-letter code: Polyadenylate-binding protein-interacting protein 4 (595 aa).

Positions 48 to 113 (RLVYFTTCKI…SRSEFVRKPP (66 aa)) constitute a Sm domain. Polar residues-rich tracts occupy residues 302–313 (GGSSTSDGQKPA) and 326–346 (GDSQ…TSKQ). Disordered regions lie at residues 302 to 505 (GGSS…FYYP) and 536 to 595 (MYHP…KGRE). Basic and acidic residues predominate over residues 364 to 382 (DEQRRKNNEEVSHNNRSAE). The segment covering 416-465 (SQVSSKTKSESSFGQSASRSSESRPGPSTSSRPGLSPSSSIGSMASSEKS) has biased composition (low complexity). Residues 466 to 474 (TLNPNAKEF) carry the PAM2-like 1; degenerate motif. Positions 475–485 (KLNPKAKSFKP) match the PAM2-like 2 motif. 2 stretches are compositionally biased toward low complexity: residues 488–501 (SAAA…ADAS) and 548–570 (QPQY…PGQQ).

Expressed in cauline leaves, stems, rosette leaves, immature siliques and primary inflorescences.

The polypeptide is Polyadenylate-binding protein-interacting protein 4 (CID4) (Arabidopsis thaliana (Mouse-ear cress)).